We begin with the raw amino-acid sequence, 494 residues long: Smoothelin-like protein 1 (494 aa).

Composition is skewed to basic and acidic residues over residues 1 to 10 (MEQKEGKLSE), 74 to 104 (DEVKVESQREAGGKEDAEAELKKEDGEKEET), 112 to 166 (TGRK…KATV), and 179 to 232 (TGQR…KEEA). The interval 1 to 348 (MEQKEGKLSE…ARPRGPRAQN (348 aa)) is disordered. Positions 123–145 (KEAEEKESTLASEKQKAEEKEAK) form a coiled coil. Residues 233 to 255 (DAKEEAEDAEEAEPGSPSEEQEQ) are compositionally biased toward acidic residues. 2 stretches are compositionally biased toward low complexity: residues 269–279 (PSSPEEWPESP) and 302–314 (SPSASESSPSDVP). The segment covering 324-335 (GEKKEKAPERRV) has biased composition (basic and acidic residues). Ser336 is modified (phosphoserine). Residues 378–484 (GGVKNMLLEW…YIQELYRSLV (107 aa)) form the Calponin-homology (CH) domain. The interval 476–494 (IQELYRSLVQKGLVKTKKK) is calmodulin-binding.

This sequence belongs to the smoothelin family. As to quaternary structure, interacts with PPP1R12A. In terms of processing, maximal phosphorylation of Ser-336 correlates with maximal relaxation of aorta in response to acetylcholine. In terms of tissue distribution, expressed in striated muscles, specifically in type 2a fibers (at protein level).

The protein localises to the cytoplasm. It is found in the myofibril. The protein resides in the sarcomere. Its subcellular location is the i band. It localises to the m line. The protein localises to the nucleus. In terms of biological role, plays a role in the regulation of contractile properties of both striated and smooth muscles. When unphosphorylated, may inhibit myosin dephosphorylation. Phosphorylation at Ser-299 reduces this inhibitory activity. In Homo sapiens (Human), this protein is Smoothelin-like protein 1 (SMTNL1).